A 285-amino-acid polypeptide reads, in one-letter code: 4-diphosphocytidyl-2-C-methyl-D-erythritol kinase (285 aa).

Residue Lys-10 is part of the active site. 92 to 102 (PFGAGLGGGSS) is a binding site for ATP. The active site involves Asp-134.

This sequence belongs to the GHMP kinase family. IspE subfamily.

It catalyses the reaction 4-CDP-2-C-methyl-D-erythritol + ATP = 4-CDP-2-C-methyl-D-erythritol 2-phosphate + ADP + H(+). It functions in the pathway isoprenoid biosynthesis; isopentenyl diphosphate biosynthesis via DXP pathway; isopentenyl diphosphate from 1-deoxy-D-xylulose 5-phosphate: step 3/6. Functionally, catalyzes the phosphorylation of the position 2 hydroxy group of 4-diphosphocytidyl-2C-methyl-D-erythritol. The sequence is that of 4-diphosphocytidyl-2-C-methyl-D-erythritol kinase from Chloroherpeton thalassium (strain ATCC 35110 / GB-78).